The primary structure comprises 129 residues: Lysozyme C (129 aa).

Residues 1–129 (KVYGRCELAA…VQAWIRGCRL (129 aa)) form the C-type lysozyme domain. 4 disulfide bridges follow: cysteine 6/cysteine 127, cysteine 30/cysteine 115, cysteine 64/cysteine 80, and cysteine 76/cysteine 94. Catalysis depends on residues glutamate 35 and aspartate 52.

This sequence belongs to the glycosyl hydrolase 22 family. Monomer.

It is found in the secreted. It catalyses the reaction Hydrolysis of (1-&gt;4)-beta-linkages between N-acetylmuramic acid and N-acetyl-D-glucosamine residues in a peptidoglycan and between N-acetyl-D-glucosamine residues in chitodextrins.. Lysozymes have primarily a bacteriolytic function; those in tissues and body fluids are associated with the monocyte-macrophage system and enhance the activity of immunoagents. The chain is Lysozyme C (LYZ) from Tragopan satyra (Satyr tragopan).